A 52-amino-acid chain; its full sequence is ATP synthase protein 8 (52 aa).

Residues 10 to 30 (FLMSLMIMMILIFMTINFYFF) traverse the membrane as a helical segment.

It belongs to the ATPase protein 8 family. In terms of assembly, F-type ATPases have 2 components, CF(1) - the catalytic core - and CF(0) - the membrane proton channel.

Its subcellular location is the mitochondrion membrane. Functionally, mitochondrial membrane ATP synthase (F(1)F(0) ATP synthase or Complex V) produces ATP from ADP in the presence of a proton gradient across the membrane which is generated by electron transport complexes of the respiratory chain. F-type ATPases consist of two structural domains, F(1) - containing the extramembraneous catalytic core and F(0) - containing the membrane proton channel, linked together by a central stalk and a peripheral stalk. During catalysis, ATP synthesis in the catalytic domain of F(1) is coupled via a rotary mechanism of the central stalk subunits to proton translocation. Part of the complex F(0) domain. Minor subunit located with subunit a in the membrane. This chain is ATP synthase protein 8 (MT-ATP8), found in Rhipicephalus sanguineus (Brown dog tick).